The following is a 435-amino-acid chain: BAHD acyltransferase BIA1 (435 aa).

Residues His-151 and Asp-369 each act as proton acceptor in the active site.

It belongs to the plant acyltransferase family. In terms of tissue distribution, mostly expressed in roots (particularly in the root elongation zone), and, to a lower extent, in seedling, leaves (especially in hydathodes), siliques (e.g. in developing seeds) and flowers.

Its subcellular location is the cytoplasm. Functionally, monitors brassinosteroids (BR) responses and homeostasis, particularly in the root and hypocotyl in darkness. Promotes flavonoid biosynthesis. This is BAHD acyltransferase BIA1 from Arabidopsis thaliana (Mouse-ear cress).